The chain runs to 214 residues: Probable transaldolase (214 aa).

The Schiff-base intermediate with substrate role is filled by K83.

This sequence belongs to the transaldolase family. Type 3B subfamily.

It is found in the cytoplasm. The catalysed reaction is D-sedoheptulose 7-phosphate + D-glyceraldehyde 3-phosphate = D-erythrose 4-phosphate + beta-D-fructose 6-phosphate. Its pathway is carbohydrate degradation; pentose phosphate pathway; D-glyceraldehyde 3-phosphate and beta-D-fructose 6-phosphate from D-ribose 5-phosphate and D-xylulose 5-phosphate (non-oxidative stage): step 2/3. Functionally, transaldolase is important for the balance of metabolites in the pentose-phosphate pathway. This Streptococcus pyogenes serotype M1 protein is Probable transaldolase (tal).